A 3146-amino-acid chain; its full sequence is MEPPNNANTGQLGPTLPNGTVDLPTDLSREITRHFGLEQDEIEEILPCTPFQRDVIECASDDKRRAVGHVVYEIPEDVDTERLAAAWKATVRYTPALRTCIFTSETGNAFQVVLRDYFIFARMYCPSAHLKSAIVKDEATAAVAGPRCNRYVLTGEPNSKRRVLVWTFSHSFVDSAFQGRILQQVLAAYKDGHGRVFSLQPTTDLTESENGDHLSTPASERTVVIERATQFWQEKLHGLDASVFPHLPSHKRVPAIDARADHYLPCPPFIQHEWSSTTVCRTALAILLARYTHSSEALFGVVTEQSHEEHPLLLDGPTSTVVPFRVLCALNQSVSKVMEAITTYDHDMRQFAHAGLCNISRIGDDASAACGFQTVLMVTDSRTAGDDEIHQVLEESEKFIPCTDRALLLSCQMTDEGVLLVARYDQSILEPLQMARFLRQLGFLINKLQSTDGSPCVGQLDVLAPEDRTEIEGWNSEPLQTQDCLIHSEVVRNAGDTPNKPAVCAWDGEWTYSELNNVSSRLASYISSLDLGQQLIVPIYLEKSKWVMAAILAVLKAGHAFTLIDPNDPPARTAQIIKQASASIALTSALHQSKMQAVVGRCITVDDDLVQTLTTFEGSQVASAAKPGDLAYVIFTSGSTGDPKGIMIEHRAFYSSVVKFGKALGIRSSTRALQFATHGFGAFLLEVLTTLIHGGCICVPSDHDRMHNIPGFIRQNQINWMMATPSYMTTMKPEDVPGLETLVLVGEQMSSSINDVWLSELQLLDGYGQSESSSICFVGKIDDSSRDPNNLGWAIGAHSWIINPDNPDQLVPIGAIGELLIESPGIARGYLFSQSTETPFLERAPAWYASKQPPYGVKFYRTGDLARYAPDGTVICLGRMDSQVKIRGQRVELDAIENLLRRQFPSDVTVVAEAVKRSDLPSSVVITGFLISSEYVVGAPSTEDTYILDQVVTQEINAKMRQILPAHSIPSFYICMKSLPRTATGKVDRRKLRSIGSSLLALQAQSTAPRSSQAPDASAGVTKLEEVWMDIFNLTPNSHNIGGNFFALGGDSITAIKMVNMARAAGIQLKVSDIFQNPTLASLQAAIGGSSMTVTSIPALALDGPVEQSYSQGRLWFLDQLEIGANWYTIPYAVRLRGPLDVDALNRALLALEKRHETLRTTFEDQDGVGVQIIHETLLDQLRIINADHADYVQLLKQEQTAPFNLASESGWRVSLIRLDDDDNILSIVMHHIISDGWSIDVLRRELGQLYAAALHGADLFGSALSPLPIQYRDFSVWQKQDAQVAEHERQLQYWQKQLADCSPAKLPTDFHRPALLSGKATTVPVTITSELYYRLQEFCSTFNTTSFVVLLATFRAAHYRLTGVDDAVIGTPIANRNRHELENLIGFFVNTQCMRITINEDEDTFESLVRQVRSTTTAAFEHEDVPFERVVSAMLPGSRDLSQNPLAQLVFAIHSHKDLGKFELEALESEPLQNEVYTRFDAEFHFFQAPDGLTGYINFATELFKVETIQNVVSVFLQILRHGLEHPQTLISVVPLTDGLAELRSMGLLEIKKVEYPRDSSVVDVFRTQVASYPDTLAVVDSSSRLTYAELDHQSDLLATWLRQQNLPTEALVVVLAPRSCETIITFLGILKANLAYLPLDIRSPITRMRDVLSTLPGRTIALLCSDEVAPDFQLPSIELVRIADALEEAAGMTSLNGHEHVPVPSPSPTSLAYVLYTSGSTGRPKGVMIEHRAIVRLARSDIIPDYRPACGDTMAHMFNTAFDGATYEIYTMLLNGGTLVCVDYMDTLSPKSLEAVFKKEQVNATIMAPALLKLYLADARDALKGLDVLISGGDRFDPQDAVDAQSLVRGSCYNGYGPTENGVFSTVYKVDKNDPFVNGVPLGRAVNNSGAYVVDRNQQLVGPGIIGELVVTGDGLARGYTERAFDQNRFTQLKVEGQSVRGYRTGDRVRYRVGEGLIEFFGRMDFQFKIRSNRIEAGEVEAAILSHPAVRNAAVILRVEEKLEPEIVGFVVAEHDDTAEQEEAGDQVEGWQAFFESTTYTELDTVSSSEIGKDFKGWTSMYDGNEIDKAEMQEWLDDTIHTLTDGQALGHVLEIGTGSGMVLFNLGSGLQSFVGLEPSKSAAAFVNNAIKSTPALAGKAQVFVGTATDTNKLDDLHPDLVIFNSVLQYFPTRDYLERVVDALVHLRSAKRIFFGDVRSYATNRHFLAARAIYTLGNHTTKDEVRKKMAEMEEREEEFLVEPAFFTTLVNRLPDVRHVEIIPKNMQATNELSAYRYAAVVHLRGSDELTRPVHPIKMDDWVDFQASHMHKDALREYLRLAENTKTVAISNIPYGKTIFERQVVESLDETSEDAPHASLDGAAWISAVRSDAKARSSLSVPDLVLLAKETGFRVEVSAARQWSQSGALDAVFHRYPAEPGVRTLFQFPTDNDVRMSAPLTNQPLQRLQKRRVAVQVREWLQDRIPSYMIPSHIVALDQMPLNTSGKVDRKELSRQAKAIKKVQKSAPPTAPAFPLSEVEVMLCEELTKTFEMDVNITDDFFQLGGHSLLATRLVARISHRLGARLTVKDVFDYPVFSELADIIRQQLASKNTLLPTASAGGGGQDKKESAGVAPTTDMEAMLCEEFANILGMDVGITDNFFDLGGHSLMATRLAARIGHRLNTTISVKDIFSHPVIFQLSAKLEVSQLESSSGGTDIKMPDYTAFQLIPAADAEKFMQDHIYPQINFSQDMVQDVYLATHLQQCFLRDVFGRPKPLVPFYVEFPPDSNPHTLATACTSLVDKYDIFRTIFVEAEGNLYQVVLKHLNLDIDVVETDANVHKTSSDLVDAIAKEPVRLGQPMIQVKVLKQTSSVRVLLWLSHALYDGLSWEHIVRDLHILSKERSLPPATQFSRYMQYVDHTRGPGCDFWRDVLQNAPITNLSDAGSGGRPTKAGDPRVWHAGKVISGPSQAIRSSITQATVFNAACAIVLSKETGTDNVVFGRIVSGRQGLPVRWQNIIGPCTNAVPVRAVVDAHGNHQQMLRDLQEQYLLSLPYETIGFDEIKRSCTDWPDSARNYGCCVTYQNFEYHPESEVDQQRVEMGILAKKAELIKEEPLYNVAIAGEVEPDGVHLQVTVVVDSQLFSQEGATHLMEQVCNTFQALNASL.

Positions 1 to 12 (MEPPNNANTGQL) are enriched in polar residues. A disordered region spans residues 1-23 (MEPPNNANTGQLGPTLPNGTVDL). Residues 69–454 (HVVYEIPEDV…INKLQSTDGS (386 aa)) form a condensation 1 region. The adenylation 1 stretch occupies residues 495–887 (GDTPNKPAVC…GRMDSQVKIR (393 aa)). A Carrier 1 domain is found at 1015–1091 (PDASAGVTKL…SLQAAIGGSS (77 aa)). Serine 1052 is subject to O-(pantetheine 4'-phosphoryl)serine. Residues 1109–1538 (SYSQGRLWFL…QTLISVVPLT (430 aa)) form a condensation 2 region. The adenylation 2 stretch occupies residues 1567–1973 (FRTQVASYPD…GRMDFQFKIR (407 aa)). An S-adenosyl-L-methionine-dependent N-methyltransferase (MT) region spans residues 2041–2181 (TYTELDTVSS…FPTRDYLERV (141 aa)). Carrier domains are found at residues 2514-2588 (FPLS…RQQL) and 2614-2688 (APTT…EVSQ). Serine 2548 and serine 2648 each carry O-(pantetheine 4'-phosphoryl)serine. The interval 2734-3138 (QDVYLATHLQ…THLMEQVCNT (405 aa)) is condensation 3.

It belongs to the NRP synthetase family.

It catalyses the reaction 4 (R)-2-hydroxy-3-methylbutanoate + 4 L-leucine + 4 S-adenosyl-L-methionine + 8 ATP = bassianolide + 8 AMP + 4 S-adenosyl-L-homocysteine + 8 diphosphate + 8 H(+). Its function is as follows. Bassianolide nonribosomal synthetase that mediates the biosynthesis of bassianolide (BSL), a non-ribosomal cyclodepsipeptide that shows insecticidal and cancer cell antiproliferative activity. BSLS first catalyzes the iterative synthesis of an enzyme-bound dipeptidol monomer intermediate from D-2-hydroxyisovalerate and L-leucine before performing the condensation and cyclization of 4 dipeptidol monomers to yield the cyclic tetrameric ester bassianolide. The N-methyltransferase MT domain is responsible for the methylation of the leucine residues of bassianolide. BSLS is flexible with both the amino acid and hydroxyl acid precursors, and produces bassianolide as the major product (containing N-methyl-L-Leu), together with small amounts of beauvericin and its analogs beauvericins A-C (containing N-methyl-L-Phe). The protein is Bassianolide nonribosomal cyclodepsipeptide synthetase of Beauveria bassiana (White muscardine disease fungus).